A 681-amino-acid chain; its full sequence is Fibulin-1 (681 aa).

An N-terminal signal peptide occupies residues 1-17 (MDLYMIVLLSLCGLLRA). Disulfide bonds link Cys29-Cys55, Cys30-Cys62, Cys43-Cys63, Cys72-Cys103, Cys85-Cys104, Cys106-Cys125, Cys107-Cys138, Cys114-Cys139, Cys162-Cys171, Cys167-Cys176, Cys178-Cys191, Cys197-Cys210, Cys204-Cys219, Cys225-Cys237, Cys243-Cys256, Cys250-Cys265, Cys271-Cys283, Cys289-Cys301, Cys317-Cys330, Cys336-Cys348, Cys343-Cys357, Cys359-Cys372, Cys378-Cys390, Cys386-Cys399, Cys401-Cys414, Cys420-Cys429, Cys440-Cys454, Cys460-Cys473, Cys469-Cys482, Cys484-Cys498, Cys504-Cys517, Cys511-Cys526, and Cys531-Cys553. Anaphylatoxin-like domains are found at residues 29 to 63 (CCED…EQCC), 68 to 107 (EDSI…CECC), and 108 to 139 (LLGS…RSCC). Positions 158–192 (TEDQCRAAGCAQRCLNGTCSCLDGFKLKTDGKHCE) constitute an EGF-like 1 domain. Asn173 is a glycosylation site (N-linked (GlcNAc...) asparagine). An EGF-like 2; calcium-binding domain is found at 193–238 (DINECLLGPHHCVTGERCINTLGSYRCQREISCGTGYELTDNNKCK). The EGF-like 3; calcium-binding domain maps to 239 to 284 (DIDECDLGTHNCAAEMECQNTAGSFRCRPRMQCAAGFIQDALGSCI). The 47-residue stretch at 285 to 331 (DINECVSVTALSRGQMCFNTVGSFICQRHSVTCGRGYHLNAEGTRCV) folds into the EGF-like 4; calcium-binding domain. The EGF-like 5; calcium-binding domain maps to 332 to 373 (DIDECAGPDNSCDGHGCINLVGSYRCECRTGFIFNSISRSCE). Positions 374-415 (DIDECRNYPGRLCAHKCENILGSYKCSCTAGFKLADDGRNCD) constitute an EGF-like 6; calcium-binding domain. An EGF-like 7; calcium-binding domain is found at 416–455 (DVNECESSPCSQGCANVYGSYQSYCRRGYQLSDADGITCE). In terms of domain architecture, EGF-like 8; calcium-binding spans 456–499 (DIDECALPTGGHICSYRCHNTPGSFHCTCPASGYTLAANGRSCQ). In terms of domain architecture, EGF-like 9; calcium-binding spans 500-554 (DIDECLTGTHSCSESESCFNIQGGFRCLSFDCPANYRRSGDTRPRVDRADIIRCV).

The protein belongs to the fibulin family. In terms of assembly, homomultimerizes and interacts with various extracellular matrix components such as FN1, LAMA1, NID, AGC1 and CSPG2.

The protein resides in the secreted. It is found in the extracellular space. Its subcellular location is the extracellular matrix. Its function is as follows. Incorporated into fibronectin-containing matrix fibers. May play a role in cell adhesion and migration along protein fibers within the extracellular matrix (ECM). Could be important for certain developmental processes and contribute to the supramolecular organization of ECM architecture, in particular to those of basement membranes. The protein is Fibulin-1 (fbln1) of Danio rerio (Zebrafish).